The chain runs to 369 residues: MKNAYYIGLMSGTSMDGVDAVLVDFSGPQPQLICSHTEAIPSHLLKGLQRLCLPGADEINRLGRLDRNVGQLFALAVNNLLAKCNIAKEDIIAIGSHGQTVRHMPNLEVGFTLQIGDPNTIATETGIDVIADFRRKDIALGGQGAPLVPAFHQQTFAEIDKKRIILNIGGIANVTYLPGTSEHVLGFDTGPGNTLIDAWIQHVKSEPFDKNGEWAASGKTNPDLLAQLLSHPYFSLAYPKSTGRELFNQAWLEQQLSPFNHLDEEDIQSTLLDMTCHSIARDVIKLSPEGELFVCGGGAFNTQLMQRLAALLPGYKLDTTSALGVDPKWAEGIAFAWLAMRNHLGLPANLPAVTGASREAVLGGRFSAK.

12–19 (GTSMDGVD) is an ATP binding site.

The protein belongs to the anhydro-N-acetylmuramic acid kinase family.

It carries out the reaction 1,6-anhydro-N-acetyl-beta-muramate + ATP + H2O = N-acetyl-D-muramate 6-phosphate + ADP + H(+). Its pathway is amino-sugar metabolism; 1,6-anhydro-N-acetylmuramate degradation. The protein operates within cell wall biogenesis; peptidoglycan recycling. In terms of biological role, catalyzes the specific phosphorylation of 1,6-anhydro-N-acetylmuramic acid (anhMurNAc) with the simultaneous cleavage of the 1,6-anhydro ring, generating MurNAc-6-P. Is required for the utilization of anhMurNAc either imported from the medium or derived from its own cell wall murein, and thus plays a role in cell wall recycling. The chain is Anhydro-N-acetylmuramic acid kinase from Shewanella putrefaciens (strain CN-32 / ATCC BAA-453).